The primary structure comprises 286 residues: Polyamine aminopropyltransferase (286 aa).

The 234-residue stretch at 5–238 (PLWHETLHDH…GIMTFAWASD (234 aa)) folds into the PABS domain. Residue Gln33 participates in S-methyl-5'-thioadenosine binding. Spermidine-binding residues include His64 and Asp88. S-methyl-5'-thioadenosine is bound by residues Glu108 and 140–141 (DG). Asp158 acts as the Proton acceptor in catalysis. 158-161 (DCTD) contacts spermidine. Pro165 provides a ligand contact to S-methyl-5'-thioadenosine.

It belongs to the spermidine/spermine synthase family. In terms of assembly, homodimer or homotetramer.

It localises to the cytoplasm. The enzyme catalyses S-adenosyl 3-(methylsulfanyl)propylamine + putrescine = S-methyl-5'-thioadenosine + spermidine + H(+). It functions in the pathway amine and polyamine biosynthesis; spermidine biosynthesis; spermidine from putrescine: step 1/1. Catalyzes the irreversible transfer of a propylamine group from the amino donor S-adenosylmethioninamine (decarboxy-AdoMet) to putrescine (1,4-diaminobutane) to yield spermidine. This is Polyamine aminopropyltransferase from Klebsiella pneumoniae subsp. pneumoniae (strain ATCC 700721 / MGH 78578).